The sequence spans 612 residues: Dihydroxy-acid dehydratase (612 aa).

Asp81 is a binding site for Mg(2+). Position 122 (Cys122) interacts with [2Fe-2S] cluster. Mg(2+)-binding residues include Asp123 and Lys124. Lys124 is modified (N6-carboxylysine). Cys195 is a binding site for [2Fe-2S] cluster. Residue Glu492 participates in Mg(2+) binding. Ser518 acts as the Proton acceptor in catalysis.

The protein belongs to the IlvD/Edd family. Homodimer. It depends on [2Fe-2S] cluster as a cofactor. The cofactor is Mg(2+).

The catalysed reaction is (2R)-2,3-dihydroxy-3-methylbutanoate = 3-methyl-2-oxobutanoate + H2O. It carries out the reaction (2R,3R)-2,3-dihydroxy-3-methylpentanoate = (S)-3-methyl-2-oxopentanoate + H2O. It participates in amino-acid biosynthesis; L-isoleucine biosynthesis; L-isoleucine from 2-oxobutanoate: step 3/4. It functions in the pathway amino-acid biosynthesis; L-valine biosynthesis; L-valine from pyruvate: step 3/4. In terms of biological role, functions in the biosynthesis of branched-chain amino acids. Catalyzes the dehydration of (2R,3R)-2,3-dihydroxy-3-methylpentanoate (2,3-dihydroxy-3-methylvalerate) into 2-oxo-3-methylpentanoate (2-oxo-3-methylvalerate) and of (2R)-2,3-dihydroxy-3-methylbutanoate (2,3-dihydroxyisovalerate) into 2-oxo-3-methylbutanoate (2-oxoisovalerate), the penultimate precursor to L-isoleucine and L-valine, respectively. This is Dihydroxy-acid dehydratase from Kocuria rhizophila (strain ATCC 9341 / DSM 348 / NBRC 103217 / DC2201).